The chain runs to 120 residues: Large ribosomal subunit protein bL19 (120 aa).

The protein belongs to the bacterial ribosomal protein bL19 family.

Functionally, this protein is located at the 30S-50S ribosomal subunit interface and may play a role in the structure and function of the aminoacyl-tRNA binding site. In Chlorobium phaeobacteroides (strain DSM 266 / SMG 266 / 2430), this protein is Large ribosomal subunit protein bL19.